The chain runs to 145 residues: Histone H2B.7 (145 aa).

Positions 1-30 (MAPKAEKKPAEKKPVEEKSKAEKAPAEKKP) are enriched in basic and acidic residues. The disordered stretch occupies residues 1–53 (MAPKAEKKPAEKKPVEEKSKAEKAPAEKKPKAGKKLPKEAGAGGDKKKKMKKK). Position 2 is a n,N,N-trimethylalanine; alternate (alanine 2). Alanine 2 carries the post-translational modification N,N-dimethylalanine; alternate. N-methylalanine; alternate is present on alanine 2. Lysine 4 carries the post-translational modification N6-methyllysine; partial. N6-acetyllysine occurs at positions 7 and 12. Position 13 is an N6,N6-dimethyllysine (lysine 13). Lysine 23, lysine 28, and lysine 34 each carry N6-acetyllysine. Residue lysine 35 is modified to N6-acetyllysine; partial. Lysine 141 is covalently cross-linked (Glycyl lysine isopeptide (Lys-Gly) (interchain with G-Cter in ubiquitin)).

This sequence belongs to the histone H2B family. The nucleosome is a histone octamer containing two molecules each of H2A, H2B, H3 and H4 assembled in one H3-H4 heterotetramer and two H2A-H2B heterodimers. The octamer wraps approximately 147 bp of DNA. Post-translationally, can be acetylated to form H2BK6ac, H2BK11ac, H2BK22ac, H2BK27ac H2BK33ac and H2BK34ac. Mono-, di- or trimethylated at the N-terminus to form H2BA1me1/2/3. H2BA1me2 and H2BA1me3 may be methylated and/or acetylated to form H2BA1me2K3me1, H2BA1me2K3me1K6ac, H2BA1me2K6ac H2BA1me3K6ac, H2BA1me3K6acK11ac and H2BA1me2K3me1K6acK11ac. In terms of processing, monoubiquitinated by BRE1 to form H2BK143ub1 and deubiquitinated by UBP26. Required for heterochromatic histone H3 di- and trimethylation at H3K4me. May give a specific tag for epigenetic transcriptional activation.

It localises to the nucleus. The protein resides in the chromosome. Its function is as follows. Core component of nucleosome. Nucleosomes wrap and compact DNA into chromatin, limiting DNA accessibility to the cellular machineries which require DNA as a template. Histones thereby play a central role in transcription regulation, DNA repair, DNA replication and chromosomal stability. DNA accessibility is regulated via a complex set of post-translational modifications of histones, also called histone code, and nucleosome remodeling. This chain is Histone H2B.7, found in Arabidopsis thaliana (Mouse-ear cress).